Consider the following 306-residue polypeptide: D-alanine--D-alanine ligase (306 aa).

Residues 101–300 (KVVMAAAGIP…FGELVTWMVE (200 aa)) enclose the ATP-grasp domain. 128–182 (LPPPYVLKPNTGGSSVGVFIVKEDQPHPPQELFRADWTFGESLMAEPFIKGLELT) serves as a coordination point for ATP. D250, E267, and N269 together coordinate Mg(2+).

Belongs to the D-alanine--D-alanine ligase family. The cofactor is Mg(2+). Requires Mn(2+) as cofactor.

It localises to the cytoplasm. The catalysed reaction is 2 D-alanine + ATP = D-alanyl-D-alanine + ADP + phosphate + H(+). Its pathway is cell wall biogenesis; peptidoglycan biosynthesis. Its function is as follows. Cell wall formation. This is D-alanine--D-alanine ligase from Azorhizobium caulinodans (strain ATCC 43989 / DSM 5975 / JCM 20966 / LMG 6465 / NBRC 14845 / NCIMB 13405 / ORS 571).